The primary structure comprises 110 residues: Large ribosomal subunit protein uL22 (110 aa).

Belongs to the universal ribosomal protein uL22 family. In terms of assembly, part of the 50S ribosomal subunit.

Functionally, this protein binds specifically to 23S rRNA; its binding is stimulated by other ribosomal proteins, e.g. L4, L17, and L20. It is important during the early stages of 50S assembly. It makes multiple contacts with different domains of the 23S rRNA in the assembled 50S subunit and ribosome. Its function is as follows. The globular domain of the protein is located near the polypeptide exit tunnel on the outside of the subunit, while an extended beta-hairpin is found that lines the wall of the exit tunnel in the center of the 70S ribosome. The polypeptide is Large ribosomal subunit protein uL22 (Pectobacterium atrosepticum (strain SCRI 1043 / ATCC BAA-672) (Erwinia carotovora subsp. atroseptica)).